Here is a 468-residue protein sequence, read N- to C-terminus: MSSNKTSSFVPWKVATILKHQKTLEAVIQKAFLPGDPAEALNSSQFCETTAALDSTAPCKICQCLHQLCTHHSPDLSFYGDYAIICYYALHAPKTMASNLMLLADCLELIQLYFPDAPSPPPNINGLDIYLHFFVNRCFRLANTEKIMEWSNLDMLKTEFLRATLSGSLSGAFCFKTLWPSLTRAPVRMADECTCTPITNPGCGLDGGKLFHPACIGKDNFLDLILIFWKNTDAMTPANSLLADTLSRHQVYFQNLTPVETNASLDPSPALDTTQGPCLLSPALCLQKKNHTSSLCLLCECLASHSEAASVFQTFKHLVLNSINNKVKLLDRILFLQQDADSLSFIQDRELLKSVLVNCSPQEIHKHLFCDPLCALNSSLTDSVVLFGEVPDFEFTAFKATLATGNSLVHRSFQSCEILETLILLFKSLQTVKANKTTVSEIIKEVDASLKKHKFSLLSCYYTFNIYT.

Residues C59, C62, H132, C138, C296, C299, H367, and C374 each contribute to the Zn(2+) site. Zinc finger stretches follow at residues 59 to 138 and 296 to 374; these read CKIC…VNRC and CLLC…DPLC.

It belongs to the herpesviridae UL32 protein family.

The protein resides in the host cytoplasm. It localises to the host nucleus. Its function is as follows. Plays a role in efficient localization of neo-synthesized capsids to nuclear replication compartments, thereby controlling cleavage and packaging of virus genomic DNA. This Connochaetes taurinus (Blue wildebeest) protein is Packaging protein UL32 homolog (68).